Here is a 113-residue protein sequence, read N- to C-terminus: Ferredoxin-1 (113 aa).

4Fe-4S ferredoxin-type domains are found at residues 2–30 and 31–60; these read TYIV…YEGE and NFLV…PDTE. [3Fe-4S] cluster is bound by residues Cys-9 and Cys-17. Cys-21, Cys-40, Cys-43, and Cys-46 together coordinate [4Fe-4S] cluster. Residue Cys-50 coordinates [3Fe-4S] cluster.

Requires [4Fe-4S] cluster as cofactor. The cofactor is [3Fe-4S] cluster.

This is Ferredoxin-1 (fdxA) from Caulobacter vibrioides (strain ATCC 19089 / CIP 103742 / CB 15) (Caulobacter crescentus).